We begin with the raw amino-acid sequence, 373 residues long: Glutamate 5-kinase (373 aa).

Lys-12 contributes to the ATP binding site. The substrate site is built by Ser-52, Asp-139, and Asn-154. An ATP-binding site is contributed by 216 to 222 (TGGMVTK). The PUA domain maps to 281–359 (RGNICIDDGA…DEINTVLAGN (79 aa)).

The protein belongs to the glutamate 5-kinase family.

It localises to the cytoplasm. It catalyses the reaction L-glutamate + ATP = L-glutamyl 5-phosphate + ADP. The protein operates within amino-acid biosynthesis; L-proline biosynthesis; L-glutamate 5-semialdehyde from L-glutamate: step 1/2. Functionally, catalyzes the transfer of a phosphate group to glutamate to form L-glutamate 5-phosphate. The polypeptide is Glutamate 5-kinase (Dehalococcoides mccartyi (strain ATCC BAA-2266 / KCTC 15142 / 195) (Dehalococcoides ethenogenes (strain 195))).